Here is a 273-residue protein sequence, read N- to C-terminus: Glutamate racemase (273 aa).

Substrate contacts are provided by residues 9–10 and 41–42; these read DS and YG. Cys-73 serves as the catalytic Proton donor/acceptor. Residue 74–75 coordinates substrate; it reads NT. The active-site Proton donor/acceptor is Cys-183. Position 184–185 (184–185) interacts with substrate; that stretch reads TH.

The protein belongs to the aspartate/glutamate racemases family.

It carries out the reaction L-glutamate = D-glutamate. It functions in the pathway cell wall biogenesis; peptidoglycan biosynthesis. Functionally, provides the (R)-glutamate required for cell wall biosynthesis. This chain is Glutamate racemase, found in Shewanella sp. (strain ANA-3).